Consider the following 1630-residue polypeptide: MDLHPPGGSKKTSVVVVTLDTGEVYVIASLLSKADTQVIYIDPTTGILRYNGKPGLDNFKSEREALDYITNGSRGGVRSSVYARAILGYAVLGSFGMLLVATRLNPSIPDLPGGGCVYTVAESQWVKIPLYNPQPQGKGETKNIQELTELDIDGKHYFCDTRDITRPFPSRMPLQSPDDEFVWNRWLSVPFKNIGLPEHCVILLQGFAEYRPFGSSGQLEGIVALMARRSRLHPGTRYLARGINSCSGTGNEVECEQLVWIPKRNGQSIAFNSYIWRRGTIPIWWGAELKMTAAEAEIYVADRDPYKGSTEYYQRLSKRYDTRNLDAPVGENQKKKAFVPIVCVNLLRSGEGKSECILVQHFEESMNFIKSSGKLPYTRVHLINYDWHASVKLKGEQQTIEGLWMYLKSPTMAIGISEGDYLPSRQRLKDCRGEVICIDDIEGAFCLRSHQNGVIRFNCADSLDRTNAASFFGGLQVFVEQCRRLGISLDTDLGYGHNSVNNQGGYNAPLPPGWEKRADAVTGKSYYIDHNTKTTTWSHPCPDKPWKRLDMRFEEFKRSTILSPVSELADLFLQQGDIHATLYTGSKAMHSQILNIFSEESGAFKQFSAAQKNMKITLQRRYKNAMVDSSRQKQLEMFLGMRLFKHLPSIPVQPLHVLSRPSGFFLKPVPNMSESSNDGSSLLSIKRKDITWLCPQAADIVELFIYLSEPCHVCQLLLTISHGADDLTCPSTVDVRTGRHIEDLKLVVEGASIPRCANGTNLLVPLPGPISSEDMAVTGAGARLHEKDTSSLSLLYDFEELEGQLDFLTRVVAVTFYPAGAVRIPMTLGQIEVLGISLPWKGMFTCERTGGRLAELARKPDEDGSPFSSCSDLNPFAATTSLQAETVSTPVQQKDPFPSNLLDLLTGEDSSSDPFPQPVVECIASGGNDMLDFLDEAVVEYRGSDTVPDGSVPQNKRPKDSGAHLYLNCLKSLAGPNMAKKLEFVEAMKLEIERLRLNISAAERDRALLSIGIDPATINPNSSYDELYIGRLCKIANALAVMGQASLEDKIIASIGLEKLENNVIDFWNITRIGEGCDGGMCQVRAEVNKSPVGSSTKSSRGESGSVFLCFQCMKKACKFCCAGKGALLLSKSYSRDTANGGGSLADVSATSIGSDHYICKKCCSSIVLEALIVDYVRVMVSLRRSGRVDNAGREALNEVFGSNITNHLAVRGQPSPNREDFNFLRQILGKEESLSEFPFASFLHKVETATDSAPFFSLLTPLNLASSNAYWKAPPSADSVEAAIVLNTLSDVSSVILLVSPCGYSDADAPTVQIWASSDINKEARTLMGKWDVQSFIRSSPELSGSEKSGRAPRHIKFAFKNPVRCRIIWITLRLPRLGSSSSVSLDKNINLLSLDENPFAPIPRRASFGATIENDPCIHAKHILVTGNTVRDKTLQSVESMSVRNWLDRAPRLNRFLIPLETERPMENDLVLELYLQPASPLAAGFRLDAFSAIKPRVTHSPSSDVVDIWDPTSVIMEDRHVSPAILYIQVSVLQEQYKMVTIAEYRLPEARDGTKLYFDFPKQIQAQRVSFKLLGDVAAFTDEPAEAVDLSSRASPFAAGLSLANRIKLYYYADPYEVGKWTSLSSV.

The SAC domain maps to 147–527 (LTELDIDGKH…ADAVTGKSYY (381 aa)). The Phosphatase catalytic core; degenerate signature appears at 456 to 467 (RFNCADSLDRTN). Positions 508–542 (APLPPGWEKRADAVTGKSYYIDHNTKTTTWSHPCP) constitute a WW domain.

In terms of tissue distribution, ubiquitous. Most abundant in the roots with lower expression levels throughout the leaves and shoot.

Its function is as follows. Probable phosphoinositide phosphatase that could be involved in stress signaling. The polypeptide is Probable phosphoinositide phosphatase SAC9 (SAC9) (Arabidopsis thaliana (Mouse-ear cress)).